Consider the following 140-residue polypeptide: 3-hydroxyacyl-[acyl-carrier-protein] dehydratase FabZ (140 aa).

Residue histidine 47 is part of the active site.

Belongs to the thioester dehydratase family. FabZ subfamily.

The protein localises to the cytoplasm. It carries out the reaction a (3R)-hydroxyacyl-[ACP] = a (2E)-enoyl-[ACP] + H2O. Functionally, involved in unsaturated fatty acids biosynthesis. Catalyzes the dehydration of short chain beta-hydroxyacyl-ACPs and long chain saturated and unsaturated beta-hydroxyacyl-ACPs. The sequence is that of 3-hydroxyacyl-[acyl-carrier-protein] dehydratase FabZ from Streptococcus mutans serotype c (strain ATCC 700610 / UA159).